A 105-amino-acid chain; its full sequence is MSKLRKGDTVIVIAGKDKGKQGTVQAVKNDRIKVEGINIVTKHQKPNQATGVEGGILKQEAFLHISNVAILNAQTQKADRITYQFGEDGKKQRVYRSNGEVVATA.

It belongs to the universal ribosomal protein uL24 family. In terms of assembly, part of the 50S ribosomal subunit.

Its function is as follows. One of two assembly initiator proteins, it binds directly to the 5'-end of the 23S rRNA, where it nucleates assembly of the 50S subunit. In terms of biological role, one of the proteins that surrounds the polypeptide exit tunnel on the outside of the subunit. This chain is Large ribosomal subunit protein uL24, found in Psychrobacter arcticus (strain DSM 17307 / VKM B-2377 / 273-4).